The sequence spans 757 residues: Nitrogen fixation protein FixI (757 aa).

At 1-121 (MSCCASSAAI…GEEEGDDLLK (121 aa)) the chain is on the cytoplasmic side. One can recognise an HMA domain in the interval 37–107 (RQTELSVPNA…AIAERGYQTH (71 aa)). Residues Cys-48 and Cys-51 each contribute to the a metal cation site. Residues 122 to 143 (QLILAVAVSGFAATNIMLLSVS) traverse the membrane as a helical segment. The Extracellular segment spans residues 144–158 (VWSGADAATRDLFHW). Residues 159–178 (ISALIAGPALIYAGRFFYKS) traverse the membrane as a helical segment. Over 179-185 (AWNAIRH) the chain is Cytoplasmic. The helical transmembrane segment at 186 to 206 (GRTNMDVPIALAVSLSYGMSL) threads the bilayer. The Extracellular portion of the chain corresponds to 207–218 (HETIGHGEHAWF). A helical transmembrane segment spans residues 219 to 239 (DASVTLLFFLLIGRTLDHMMR). The Cytoplasmic portion of the chain corresponds to 240-368 (GRARTAISGL…RARYRRIADR (129 aa)). The helical transmembrane segment at 369–391 (AARYYSPAVHLLALLTFVGWMLV) threads the bilayer. Residues 392-398 (EGDVRHA) lie on the Extracellular side of the membrane. A helical membrane pass occupies residues 399 to 416 (MLVAVAVLIITCPCALGL). The Cytoplasmic portion of the chain corresponds to 417 to 688 (AVPVVQVVAA…ETSRHAGQLI (272 aa)). The active-site 4-aspartylphosphate intermediate is Asp-454. 2 residues coordinate Mg(2+): Asp-634 and Asp-638. Residues 689–708 (RQNFALAIGYNVIAVPIAIL) form a helical membrane-spanning segment. The Extracellular portion of the chain corresponds to 709-713 (GYATP). A helical membrane pass occupies residues 714-732 (LVAAVAMSSSSLVVVFNAL). Residues 733-757 (RLKRSLAAGRGATPGTLIHSGAVTS) lie on the Cytoplasmic side of the membrane.

It belongs to the cation transport ATPase (P-type) (TC 3.A.3) family. Type IB subfamily.

It localises to the cell membrane. The catalysed reaction is ATP + H2O = ADP + phosphate + H(+). Functionally, fixI is a pump of a specific cation involved in symbiotic nitrogen fixation. The four proteins FixG, FixH, FixI, and FixS may participate in a membrane-bound complex coupling the FixI cation pump with a redox process catalyzed by FixG. This Rhizobium meliloti (strain 1021) (Ensifer meliloti) protein is Nitrogen fixation protein FixI (fixI).